Consider the following 503-residue polypeptide: Cobyric acid synthase (503 aa).

The GATase cobBQ-type domain maps to 260–453 (KIGVAAIYFP…FHALFDESSV (194 aa)). Cys-341 serves as the catalytic Nucleophile. The active site involves His-445.

Belongs to the CobB/CobQ family. CobQ subfamily.

Its pathway is cofactor biosynthesis; adenosylcobalamin biosynthesis. Its function is as follows. Catalyzes amidations at positions B, D, E, and G on adenosylcobyrinic A,C-diamide. NH(2) groups are provided by glutamine, and one molecule of ATP is hydrogenolyzed for each amidation. The chain is Cobyric acid synthase from Pelodictyon phaeoclathratiforme (strain DSM 5477 / BU-1).